The sequence spans 267 residues: Thiamine thiazole synthase (267 aa).

Residues Ser-41, 60–61, Gly-68, Val-132, and 160–162 each bind NAD(+); these read ER and HVD. 2 residues coordinate Fe cation: Asp-162 and His-177. Met-227 contacts NAD(+). Arg-237 is a glycine binding site.

The protein belongs to the THI4 family. In terms of assembly, homooctamer; tetramer of dimers. Requires Fe(2+) as cofactor.

The catalysed reaction is hydrogen sulfide + glycine + NAD(+) = ADP-5-ethyl-4-methylthiazole-2-carboxylate + nicotinamide + 3 H2O + H(+). It participates in cofactor biosynthesis; thiamine diphosphate biosynthesis. Functionally, involved in the biosynthesis of the thiazole moiety of thiamine. Catalyzes the conversion of NAD and glycine to adenosine diphosphate 5-(2-hydroxyethyl)-4-methylthiazole-2-carboxylate (ADT), an adenylated thiazole intermediate, using free sulfide as a source of sulfur. The sequence is that of Thiamine thiazole synthase from Saccharolobus islandicus (strain Y.N.15.51 / Yellowstone #2) (Sulfolobus islandicus).